We begin with the raw amino-acid sequence, 95 residues long: Co-chaperonin GroES (95 aa).

Belongs to the GroES chaperonin family. In terms of assembly, heptamer of 7 subunits arranged in a ring. Interacts with the chaperonin GroEL.

It localises to the cytoplasm. In terms of biological role, together with the chaperonin GroEL, plays an essential role in assisting protein folding. The GroEL-GroES system forms a nano-cage that allows encapsulation of the non-native substrate proteins and provides a physical environment optimized to promote and accelerate protein folding. GroES binds to the apical surface of the GroEL ring, thereby capping the opening of the GroEL channel. The sequence is that of Co-chaperonin GroES from Desulfosudis oleivorans (strain DSM 6200 / JCM 39069 / Hxd3) (Desulfococcus oleovorans).